The chain runs to 1755 residues: Transposon Ty1-DR1 Gag-Pol polyprotein (1755 aa).

3 stretches are compositionally biased toward polar residues: residues 1-10 (MESQQLSNYP), 48-60 (TKAN…TPAS), and 127-152 (QSQF…GNTF). 3 disordered regions span residues 1-93 (MESQ…MMTQ), 126-173 (PQSQ…RPPP), and 352-421 (GSRN…SKST). Residues 153–165 (TDSSSADSDMTST) show a composition bias toward low complexity. The RNA-binding stretch occupies residues 299 to 401 (NNGIHINNKV…NSKSKTARAH (103 aa)). Over residues 402-418 (NVSTSNNSPSTDNDSIS) the composition is skewed to low complexity. Phosphoserine is present on serine 416. The active-site For protease activity; shared with dimeric partner is the aspartate 461. An integrase-type zinc finger-like region spans residues 583–640 (NVHTSESTRKYPYPFIHRMLAHANAQTIRYSLKNNTITYFNESDVDWSSAIDYQCPDC). The Integrase catalytic domain occupies 660–835 (NSYEPFQYLH…AGLDISTLLP (176 aa)). Mg(2+)-binding residues include aspartate 671 and aspartate 736. 3 disordered regions span residues 956–1087 (SKAV…ETEK), 1092–1111 (RSPS…NIVP), and 1130–1187 (DLPL…DNET). A compositionally biased stretch (low complexity) spans 960-969 (SPTDSTPPST). Residues 1005–1015 (STPQISNIEST) are compositionally biased toward polar residues. The segment covering 1038–1053 (ESSHASKSKDFRHSDS) has biased composition (basic and acidic residues). Polar residues-rich tracts occupy residues 1054-1082 (YSEN…QISD) and 1101-1111 (PENNSSHNIVP). Positions 1178–1212 (KKRSLEDNETEIKVSRDTWNTKNMRSLEPPRSKKR) match the Bipartite nuclear localization signal motif. Positions 1338–1476 (NNYYITQLDI…DILGLEIKYQ (139 aa)) constitute a Reverse transcriptase Ty1/copia-type domain. The Mg(2+) site is built by aspartate 1346, aspartate 1427, aspartate 1428, aspartate 1610, glutamate 1652, and aspartate 1685. The region spanning 1610-1752 (DASYGNQPYY…IKTFKLLTNK (143 aa)) is the RNase H Ty1/copia-type domain.

In terms of assembly, the capsid protein forms a homotrimer, from which the VLPs are assembled. The protease is a homodimer, whose active site consists of two apposed aspartic acid residues. Initially, virus-like particles (VLPs) are composed of the structural unprocessed proteins Gag and Gag-Pol, and also contain the host initiator methionine tRNA (tRNA(i)-Met) which serves as a primer for minus-strand DNA synthesis, and a dimer of genomic Ty RNA. Processing of the polyproteins occurs within the particle and proceeds by an ordered pathway, called maturation. First, the protease (PR) is released by autocatalytic cleavage of the Gag-Pol polyprotein yielding capsid protein p45 and a Pol-p154 precursor protein. This cleavage is a prerequisite for subsequent processing of Pol-p154 at the remaining sites to release the mature structural and catalytic proteins. Maturation takes place prior to the RT reaction and is required to produce transposition-competent VLPs.

The protein localises to the cytoplasm. The protein resides in the nucleus. The catalysed reaction is DNA(n) + a 2'-deoxyribonucleoside 5'-triphosphate = DNA(n+1) + diphosphate. It carries out the reaction Endonucleolytic cleavage to 5'-phosphomonoester.. Its function is as follows. Capsid protein (CA) is the structural component of the virus-like particle (VLP), forming the shell that encapsulates the retrotransposons dimeric RNA genome. The particles are assembled from trimer-clustered units and there are holes in the capsid shells that allow for the diffusion of macromolecules. CA also has nucleocapsid-like chaperone activity, promoting primer tRNA(i)-Met annealing to the multipartite primer-binding site (PBS), dimerization of Ty1 RNA and initiation of reverse transcription. The aspartyl protease (PR) mediates the proteolytic cleavages of the Gag and Gag-Pol polyproteins after assembly of the VLP. Functionally, reverse transcriptase/ribonuclease H (RT) is a multifunctional enzyme that catalyzes the conversion of the retro-elements RNA genome into dsDNA within the VLP. The enzyme displays a DNA polymerase activity that can copy either DNA or RNA templates, and a ribonuclease H (RNase H) activity that cleaves the RNA strand of RNA-DNA heteroduplexes during plus-strand synthesis and hydrolyzes RNA primers. The conversion leads to a linear dsDNA copy of the retrotransposon that includes long terminal repeats (LTRs) at both ends. In terms of biological role, integrase (IN) targets the VLP to the nucleus, where a subparticle preintegration complex (PIC) containing at least integrase and the newly synthesized dsDNA copy of the retrotransposon must transit the nuclear membrane. Once in the nucleus, integrase performs the integration of the dsDNA into the host genome. The protein is Transposon Ty1-DR1 Gag-Pol polyprotein (TY1B-DR1) of Saccharomyces cerevisiae (strain ATCC 204508 / S288c) (Baker's yeast).